The chain runs to 309 residues: NAD kinase (309 aa).

Asp-89 (proton acceptor) is an active-site residue. Residues Asp-89 to Gly-90, Asn-163 to Glu-164, His-174, Arg-191, Asp-193, and Thr-204 to Ser-209 contribute to the NAD(+) site.

This sequence belongs to the NAD kinase family. A divalent metal cation serves as cofactor.

The protein resides in the cytoplasm. It catalyses the reaction NAD(+) + ATP = ADP + NADP(+) + H(+). In terms of biological role, involved in the regulation of the intracellular balance of NAD and NADP, and is a key enzyme in the biosynthesis of NADP. Catalyzes specifically the phosphorylation on 2'-hydroxyl of the adenosine moiety of NAD to yield NADP. This is NAD kinase from Shewanella frigidimarina (strain NCIMB 400).